The following is a 489-amino-acid chain: Blue-light-activated histidine kinase (489 aa).

The 75-residue stretch at 19–93 (ATDPFRAAVE…AIKSAIAAEK (75 aa)) folds into the PAS domain. At Cys-69 the chain carries S-4a-FMN cysteine. PAC domains are found at residues 93 to 147 (KPID…ELEK) and 232 to 281 (YSIE…NKAL). The interval 259–341 (NPLVLGIVQD…LLKENWAGAT (83 aa)) is HWE histidine kinase domain. His-288 is subject to Phosphohistidine; by autocatalysis.

FMN binds covalently to cysteine after exposure to blue light and this bond is spontaneously broken in the dark.

It catalyses the reaction ATP + protein L-histidine = ADP + protein N-phospho-L-histidine.. Its function is as follows. Photosensitive kinase that is involved in increased bacterial virulence upon exposure to light. Once ejected from an infected animal host, sunlight acts as an environmental signal that increases the virulence of the bacterium, preparing it for infection of the next host. This photoreceptor protein is directly related to the bacterium's survival and replication within host macrophages, as it is required for optimal replication of bacteria inside macrophages. The sequence is that of Blue-light-activated histidine kinase from Brucella abortus (strain 2308).